Consider the following 423-residue polypeptide: Probable WRKY transcription factor 58 (423 aa).

Disordered regions lie at residues 91 to 128 (SSAH…AVHG), 142 to 171 (RNHY…DGYN), and 215 to 284 (IYKG…GVST). Composition is skewed to low complexity over residues 99 to 111 (QPRQ…PQRP) and 144 to 162 (HYNN…VVNV). A DNA-binding region (WRKY 1) is located at residues 161–225 (NVDKPADDGY…YKGQHDHERP (65 aa)). A compositionally biased stretch (acidic residues) spans 259-271 (DDDDDDDEDDEDL). Residues 300 to 365 (SEVDLLDDGY…YEGKHNHDVP (66 aa)) constitute a DNA-binding region (WRKY 2).

It localises to the nucleus. Its function is as follows. Transcription factor. Interacts specifically with the W box (5'-(T)TGAC[CT]-3'), a frequently occurring elicitor-responsive cis-acting element. The polypeptide is Probable WRKY transcription factor 58 (WRKY58) (Arabidopsis thaliana (Mouse-ear cress)).